The following is a 1032-amino-acid chain: Histone lysine demethylase PHF8 (1032 aa).

The segment at 5–56 adopts a PHD-type zinc-finger fold; that stretch reads PVYCLCRLPYDVTRFMIECDVCQDWFHGSCVGVEEDKAAEIDLYHCPNCQVT. The linker stretch occupies residues 65–83; sequence RRGAVKHADVGLGRDSGRP. Residues 199 to 355 form the JmjC domain; that stretch reads FSDTRLSNLV…MQLRAYEIEK (157 aa). Threonine 248 contacts substrate. Residues histidine 251 and aspartate 253 each coordinate Fe cation. Lysine 268 contributes to the substrate binding site. Histidine 323 serves as a coordination point for Fe cation. Disordered regions lie at residues 455-515, 577-660, 697-857, 875-923, and 943-1015; these read SGTP…KGKE, QGKK…VDFD, LDSA…REGA, QQEQ…EPPV, and EYTA…ATAK. Residues 473–483 show a composition bias toward polar residues; the sequence is QLNTPLTFSQH. The span at 583–592 shows a compositional bias: low complexity; the sequence is AGSANGAGSS. Residues 620-632 are compositionally biased toward basic residues; sequence PRRRPSLPSKKKL. Basic and acidic residues predominate over residues 644-655; sequence PCSDPHRIREPG. 2 stretches are compositionally biased toward low complexity: residues 699 to 710 and 724 to 739; these read SALSEEAPASPS and PPSS…PLSI. The segment covering 774-784 has biased composition (basic residues); that stretch reads PGKRPIKRPAR. Residues 848 to 857 show a composition bias toward basic and acidic residues; sequence KQERPVREGA. Residues 882–891 are compositionally biased toward basic residues; that stretch reads ITKRKYTKKK. Over residues 970-990 the composition is skewed to low complexity; it reads SRRPSLSPQNSSSYSPSAPSP.

This sequence belongs to the JHDM1 histone demethylase family. JHDM1D subfamily. Fe(2+) is required as a cofactor.

Its subcellular location is the nucleus. It is found in the nucleolus. It carries out the reaction N(6),N(6)-dimethyl-L-lysyl(36)-[histone H3] + 2 2-oxoglutarate + 2 O2 = L-lysyl(36)-[histone H3] + 2 formaldehyde + 2 succinate + 2 CO2. It catalyses the reaction N(6),N(6)-dimethyl-L-lysyl(9)-[histone H3] + 2 2-oxoglutarate + 2 O2 = L-lysyl(9)-[histone H3] + 2 formaldehyde + 2 succinate + 2 CO2. In terms of biological role, histone lysine demethylase with selectivity for the di- and monomethyl states that plays a key role cell cycle progression, rDNA transcription and brain development. Demethylates mono- and dimethylated histone H3 'Lys-9' residue (H3K9Me1 and H3K9Me2), dimethylated H3 'Lys-27' (H3K27Me2) and monomethylated histone H4 'Lys-20' residue (H4K20Me1). Acts as a transcription activator as H3K9Me1, H3K9Me2, H3K27Me2 and H4K20Me1 are epigenetic repressive marks. Involved in cell cycle progression by being required to control G1-S transition. Acts as a coactivator of rDNA transcription, by activating polymerase I (pol I) mediated transcription of rRNA genes. Has activity toward H4K20Me1 only when nucleosome is used as a substrate and when not histone octamer is used as substrate. Required for brain development, probably by regulating expression of neuron-specific genes. The protein is Histone lysine demethylase PHF8 (phf8) of Danio rerio (Zebrafish).